The primary structure comprises 101 residues: Small ribosomal subunit protein uS14 (101 aa).

This sequence belongs to the universal ribosomal protein uS14 family. As to quaternary structure, part of the 30S ribosomal subunit. Contacts proteins S3 and S10.

In terms of biological role, binds 16S rRNA, required for the assembly of 30S particles and may also be responsible for determining the conformation of the 16S rRNA at the A site. This Cronobacter sakazakii (strain ATCC BAA-894) (Enterobacter sakazakii) protein is Small ribosomal subunit protein uS14.